The following is a 473-amino-acid chain: Adenosylhomocysteinase (473 aa).

3 residues coordinate substrate: threonine 64, aspartate 139, and glutamate 199. 200-202 (TTT) is an NAD(+) binding site. The substrate site is built by lysine 229 and aspartate 233. NAD(+)-binding positions include asparagine 234, 263-268 (GYGDVG), glutamate 286, asparagine 321, 342-344 (IGH), and asparagine 387.

It belongs to the adenosylhomocysteinase family. NAD(+) serves as cofactor.

It localises to the cytoplasm. The enzyme catalyses S-adenosyl-L-homocysteine + H2O = L-homocysteine + adenosine. It functions in the pathway amino-acid biosynthesis; L-homocysteine biosynthesis; L-homocysteine from S-adenosyl-L-homocysteine: step 1/1. In terms of biological role, may play a key role in the regulation of the intracellular concentration of adenosylhomocysteine. The chain is Adenosylhomocysteinase from Paraburkholderia phytofirmans (strain DSM 17436 / LMG 22146 / PsJN) (Burkholderia phytofirmans).